Reading from the N-terminus, the 276-residue chain is Large ribosomal subunit protein uL2 (276 aa).

The disordered stretch occupies residues 221 to 276; sequence RGSAMNPNDHPHGGGEGRAPIGRKSPMTPWGKKARGVKTRDRKKASNALIIRRRTK. The segment covering 252–276 has biased composition (basic residues); it reads KKARGVKTRDRKKASNALIIRRRTK.

The protein belongs to the universal ribosomal protein uL2 family. As to quaternary structure, part of the 50S ribosomal subunit. Forms a bridge to the 30S subunit in the 70S ribosome.

In terms of biological role, one of the primary rRNA binding proteins. Required for association of the 30S and 50S subunits to form the 70S ribosome, for tRNA binding and peptide bond formation. It has been suggested to have peptidyltransferase activity; this is somewhat controversial. Makes several contacts with the 16S rRNA in the 70S ribosome. This is Large ribosomal subunit protein uL2 from Onion yellows phytoplasma (strain OY-M).